Here is a 147-residue protein sequence, read N- to C-terminus: Large ribosomal subunit protein uL23A (147 aa).

Residues 1-10 (MAPSAPAKTA) are compositionally biased toward low complexity. The tract at residues 1 to 29 (MAPSAPAKTAKALDAKKKVVKGKRTTHRR) is disordered. Basic residues predominate over residues 18–29 (KVVKGKRTTHRR).

Belongs to the universal ribosomal protein uL23 family.

In terms of biological role, this protein binds to a specific region on the 26S rRNA. In Caenorhabditis elegans, this protein is Large ribosomal subunit protein uL23A.